The following is a 261-amino-acid chain: MSRIRQAFAALDGGKALIPYIAVGDPDIRTTLALMHGMVASGADILELGVPFSDPMADGPVIQRAAERALANGISLRDVLDVVRKFRETDTQTPVVLMGYLNPIHKMGYREFAQEAAKAGVDGVLTVDSPIETIDSLYRELKDNEVDCIFLIAPTTTEDRIKTIAELAGGFVYYVSLKGVTGAASLDTDEVSRKIEYLRQYIDIPIGVGFGISNAESARKIGRVAAAIIVGSRIVKEIENNAGNEAAAVGALVKELKDAVR.

Active-site proton acceptor residues include E47 and D58.

Belongs to the TrpA family. Tetramer of two alpha and two beta chains.

The catalysed reaction is (1S,2R)-1-C-(indol-3-yl)glycerol 3-phosphate + L-serine = D-glyceraldehyde 3-phosphate + L-tryptophan + H2O. The protein operates within amino-acid biosynthesis; L-tryptophan biosynthesis; L-tryptophan from chorismate: step 5/5. Functionally, the alpha subunit is responsible for the aldol cleavage of indoleglycerol phosphate to indole and glyceraldehyde 3-phosphate. The polypeptide is Tryptophan synthase alpha chain (Neisseria gonorrhoeae (strain ATCC 700825 / FA 1090)).